A 207-amino-acid polypeptide reads, in one-letter code: Imidazoleglycerol-phosphate dehydratase (207 aa).

It belongs to the imidazoleglycerol-phosphate dehydratase family.

Its subcellular location is the cytoplasm. The enzyme catalyses D-erythro-1-(imidazol-4-yl)glycerol 3-phosphate = 3-(imidazol-4-yl)-2-oxopropyl phosphate + H2O. The protein operates within amino-acid biosynthesis; L-histidine biosynthesis; L-histidine from 5-phospho-alpha-D-ribose 1-diphosphate: step 6/9. This is Imidazoleglycerol-phosphate dehydratase (hisB) from Azospirillum brasilense.